The chain runs to 57 residues: UPF0509 protein YciZ (57 aa).

The protein belongs to the UPF0509 family.

The sequence is that of UPF0509 protein YciZ (yciZ) from Shigella flexneri.